Reading from the N-terminus, the 314-residue chain is tRNA pseudouridine synthase B (314 aa).

Catalysis depends on D54, which acts as the Nucleophile.

Belongs to the pseudouridine synthase TruB family. Type 1 subfamily.

It catalyses the reaction uridine(55) in tRNA = pseudouridine(55) in tRNA. Its function is as follows. Responsible for synthesis of pseudouridine from uracil-55 in the psi GC loop of transfer RNAs. This is tRNA pseudouridine synthase B from Cupriavidus metallidurans (strain ATCC 43123 / DSM 2839 / NBRC 102507 / CH34) (Ralstonia metallidurans).